Consider the following 616-residue polypeptide: Chaperone protein HscA (616 aa).

It belongs to the heat shock protein 70 family.

In terms of biological role, chaperone involved in the maturation of iron-sulfur cluster-containing proteins. Has a low intrinsic ATPase activity which is markedly stimulated by HscB. Involved in the maturation of IscU. The polypeptide is Chaperone protein HscA (Cronobacter sakazakii (strain ATCC BAA-894) (Enterobacter sakazakii)).